The chain runs to 133 residues: Large ribosomal subunit protein uL22 (133 aa).

It belongs to the universal ribosomal protein uL22 family. As to quaternary structure, part of the 50S ribosomal subunit.

This protein binds specifically to 23S rRNA; its binding is stimulated by other ribosomal proteins, e.g. L4, L17, and L20. It is important during the early stages of 50S assembly. It makes multiple contacts with different domains of the 23S rRNA in the assembled 50S subunit and ribosome. Functionally, the globular domain of the protein is located near the polypeptide exit tunnel on the outside of the subunit, while an extended beta-hairpin is found that lines the wall of the exit tunnel in the center of the 70S ribosome. The protein is Large ribosomal subunit protein uL22 of Nocardia farcinica (strain IFM 10152).